Here is a 355-residue protein sequence, read N- to C-terminus: UDP-N-acetylglucosamine--N-acetylmuramyl-(pentapeptide) pyrophosphoryl-undecaprenol N-acetylglucosamine transferase (355 aa).

Residues 14-16 (TGG), Asn-126, Arg-164, Ser-190, Ile-243, 262-267 (ALTVAE), and Gln-288 each bind UDP-N-acetyl-alpha-D-glucosamine.

Belongs to the glycosyltransferase 28 family. MurG subfamily.

It is found in the cell inner membrane. The enzyme catalyses di-trans,octa-cis-undecaprenyl diphospho-N-acetyl-alpha-D-muramoyl-L-alanyl-D-glutamyl-meso-2,6-diaminopimeloyl-D-alanyl-D-alanine + UDP-N-acetyl-alpha-D-glucosamine = di-trans,octa-cis-undecaprenyl diphospho-[N-acetyl-alpha-D-glucosaminyl-(1-&gt;4)]-N-acetyl-alpha-D-muramoyl-L-alanyl-D-glutamyl-meso-2,6-diaminopimeloyl-D-alanyl-D-alanine + UDP + H(+). It functions in the pathway cell wall biogenesis; peptidoglycan biosynthesis. Functionally, cell wall formation. Catalyzes the transfer of a GlcNAc subunit on undecaprenyl-pyrophosphoryl-MurNAc-pentapeptide (lipid intermediate I) to form undecaprenyl-pyrophosphoryl-MurNAc-(pentapeptide)GlcNAc (lipid intermediate II). This is UDP-N-acetylglucosamine--N-acetylmuramyl-(pentapeptide) pyrophosphoryl-undecaprenol N-acetylglucosamine transferase from Psychromonas ingrahamii (strain DSM 17664 / CCUG 51855 / 37).